A 538-amino-acid polypeptide reads, in one-letter code: MMSFTTSLPYPFHILLVFILSMASITLLGRILSRPTKTKDRSCQLPPGPPGWPILGNLPELFMTRPRSKYFRLAMKELKTDIACFNFAGIRAITINSDEIAREAFRERDADLADRPQLFIMETIGDNYKSMGISPYGEQFMKMKRVITTEIMSVKTLKMLEAARTIEADNLIAYVHSMYQRSETVDVRELSRVYGYAVTMRMLFGRRHVTKENVFSDDGRLGNAEKHHLEVIFNTLNCLPSFSPADYVERWLRGWNVDGQEKRVTENCNIVRSYNNPIIDERVQLWREEGGKAAVEDWLDTFITLKDQNGKYLVTPDEIKAQCVEFCIAAIDNPANNMEWTLGEMLKNPEILRKALKELDEVVGRDRLVQESDIPNLNYLKACCRETFRIHPSAHYVPSHLARQDTTLGGYFIPKGSHIHVCRPGLGRNPKIWKDPLVYKPERHLQGDGITKEVTLVETEMRFVSFSTGRRGCIGVKVGTIMMVMLLARFLQGFNWKLHQDFGPLSLEEDDASLLMAKPLHLSVEPRLAPNLYPKFRP.

A helical membrane pass occupies residues 8 to 28 (LPYPFHILLVFILSMASITLL).

Belongs to the cytochrome P450 family. The cofactor is heme. Highly expressed in cotyledons, leaves, stems and siliques. Detected in flowers and lateral roots, but not in the main root. Expressed only in the vascular bundles in apical plant parts.

It localises to the endoplasmic reticulum membrane. The enzyme catalyses an L-polyhomomethionine + 2 reduced [NADPH--hemoprotein reductase] + 2 O2 = an (E)-omega-(methylsulfanyl)-alkanal oxime + 2 oxidized [NADPH--hemoprotein reductase] + CO2 + 3 H2O + 2 H(+). It carries out the reaction L-dihomomethionine + 2 reduced [NADPH--hemoprotein reductase] + 2 O2 = (E)-5-(methylsulfanyl)pentanal oxime + 2 oxidized [NADPH--hemoprotein reductase] + CO2 + 3 H2O + 2 H(+). It catalyses the reaction L-trihomomethionine + 2 reduced [NADPH--hemoprotein reductase] + 2 O2 = (E)-6-(methylsulfanyl)hexanal oxime + 2 oxidized [NADPH--hemoprotein reductase] + CO2 + 3 H2O + 2 H(+). Its function is as follows. Catalyzes the conversion of the short chain elongated methionines di-, tri-, and tetrahomomethionine to their respective aldoximes 5-methylthiopentanaldoxime, 6-methylthiohexanaldoxime, and 7-methylheptanaldoxime. The protein is Dihomomethionine N-hydroxylase (CYP79F1) of Arabidopsis thaliana (Mouse-ear cress).